We begin with the raw amino-acid sequence, 366 residues long: tRNA/tmRNA (uracil-C(5))-methyltransferase (366 aa).

Residues Q189, Y217, N222, E238, and D298 each contribute to the S-adenosyl-L-methionine site. C323 acts as the Nucleophile in catalysis. E357 serves as the catalytic Proton acceptor.

The protein belongs to the class I-like SAM-binding methyltransferase superfamily. RNA M5U methyltransferase family. TrmA subfamily.

The enzyme catalyses uridine(54) in tRNA + S-adenosyl-L-methionine = 5-methyluridine(54) in tRNA + S-adenosyl-L-homocysteine + H(+). The catalysed reaction is uridine(341) in tmRNA + S-adenosyl-L-methionine = 5-methyluridine(341) in tmRNA + S-adenosyl-L-homocysteine + H(+). In terms of biological role, dual-specificity methyltransferase that catalyzes the formation of 5-methyluridine at position 54 (m5U54) in all tRNAs, and that of position 341 (m5U341) in tmRNA (transfer-mRNA). The polypeptide is tRNA/tmRNA (uracil-C(5))-methyltransferase (Idiomarina loihiensis (strain ATCC BAA-735 / DSM 15497 / L2-TR)).